The following is a 359-amino-acid chain: Putative X-Core fused protein (359 aa).

Disordered stretches follow at residues 25–48 (SRGR…VPAD) and 312–359 (NAPI…ESQC). The segment covering 325-352 (VRRRGRSPRRRTPSPRRRRSESPRRRRS) has biased composition (basic residues).

This is Putative X-Core fused protein from Homo sapiens (Human).